Reading from the N-terminus, the 192-residue chain is Adenylate kinase (192 aa).

10 to 15 (GAGKGT) lines the ATP pocket. The tract at residues 30 to 59 (STGDMLREAIEKETEIGKQAKIFIESGALV) is NMP. AMP is bound by residues threonine 31, arginine 36, 57 to 59 (ALV), 85 to 88 (GYPR), and glutamine 92. The interval 126 to 142 (KRVEEVVAVGGKIRSDD) is LID. Position 127 (arginine 127) interacts with ATP. Residues arginine 139 and arginine 150 each coordinate AMP. Residue alanine 178 coordinates ATP.

This sequence belongs to the adenylate kinase family. In terms of assembly, monomer.

The protein localises to the cytoplasm. It carries out the reaction AMP + ATP = 2 ADP. The protein operates within purine metabolism; AMP biosynthesis via salvage pathway; AMP from ADP: step 1/1. Catalyzes the reversible transfer of the terminal phosphate group between ATP and AMP. Plays an important role in cellular energy homeostasis and in adenine nucleotide metabolism. This Bartonella bacilliformis (strain ATCC 35685 / KC583 / Herrer 020/F12,63) protein is Adenylate kinase.